Reading from the N-terminus, the 197-residue chain is Recombination protein RecR (197 aa).

The segment at 57 to 72 (CSVCFAITEDDPCWIC) adopts a C4-type zinc-finger fold. The Toprim domain maps to 79 to 174 (GTICVVEEPQ…KVTRLAHGIP (96 aa)).

The protein belongs to the RecR family.

Its function is as follows. May play a role in DNA repair. It seems to be involved in an RecBC-independent recombinational process of DNA repair. It may act with RecF and RecO. This is Recombination protein RecR from Citrifermentans bemidjiense (strain ATCC BAA-1014 / DSM 16622 / JCM 12645 / Bem) (Geobacter bemidjiensis).